The primary structure comprises 162 residues: UPF0262 protein HNE_1347 (162 aa).

Belongs to the UPF0262 family.

The protein is UPF0262 protein HNE_1347 of Hyphomonas neptunium (strain ATCC 15444).